Reading from the N-terminus, the 334-residue chain is Ornithine carbamoyltransferase (334 aa).

Carbamoyl phosphate-binding positions include 56 to 59, Gln-83, Arg-107, and 134 to 137; these read STRT and HPTQ. L-ornithine is bound by residues Asn-168, Asp-232, and 236–237; that span reads SM. Carbamoyl phosphate contacts are provided by residues 274–275 and Arg-320; that span reads CL.

Belongs to the aspartate/ornithine carbamoyltransferase superfamily. OTCase family.

It localises to the cytoplasm. It carries out the reaction carbamoyl phosphate + L-ornithine = L-citrulline + phosphate + H(+). It participates in amino-acid biosynthesis; L-arginine biosynthesis; L-arginine from L-ornithine and carbamoyl phosphate: step 1/3. Reversibly catalyzes the transfer of the carbamoyl group from carbamoyl phosphate (CP) to the N(epsilon) atom of ornithine (ORN) to produce L-citrulline. The sequence is that of Ornithine carbamoyltransferase from Shigella boydii serotype 4 (strain Sb227).